A 611-amino-acid polypeptide reads, in one-letter code: Major facilitator superfamily domain-containing protein YCR023C (611 aa).

Residues 1–89 (MARQKLTFKE…GRFSEKHGRK (89 aa)) lie on the Extracellular side of the membrane. The chain crosses the membrane as a helical span at residues 90–110 (ITLTCGLIGTSVSLLILGFSR). At 111–152 (NFYQALVARSLMGLLNGNVGVIRTIIGEIATERKHQALAFST) the chain is on the cytoplasmic side. The chain crosses the membrane as a helical span at residues 153-173 (MPLLFQFGAVVGPMIGGFLVF). Residues 174-199 (RDGTMNEVPLWFPHFAKRIIRSYPYA) lie on the Extracellular side of the membrane. A helical transmembrane segment spans residues 200-220 (LPNVVVCMFLMFGLTNATLFL). Residues 221 to 353 (EETHPAFKDR…SIFHHVFHTK (133 aa)) are Cytoplasmic-facing. Over residues 261–271 (DDSENIHHRNE) the composition is skewed to basic and acidic residues. Positions 261–301 (DDSENIHHRNENVNSIRGQDSEEDENSPLVNTTNDDDTESI) are disordered. S313 carries the post-translational modification Phosphoserine. Residues 354–372 (VFYPISVNFIMALHLIVYN) form a helical membrane-spanning segment. At 373–413 (EFLPVFLAYDLAVDPENPKKLASKFPWKISGGIGYEPEQTG) the chain is on the extracellular side. Residues 414–434 (TLLSTTGIFGCFVVIFIFPIV) traverse the membrane as a helical segment. The Cytoplasmic segment spans residues 435–442 (DRNFDCLT). The chain crosses the membrane as a helical span at residues 443-463 (IFRTLVKLYPIMYVMVPYVVF). Residues 464 to 542 (LQNERIPSWY…YIMSWSQQND (79 aa)) are Extracellular-facing. Residues 543–563 (VAWVSWWSLSLFCMVALYQSY) form a helical membrane-spanning segment. Over 564–611 (KIAPIDDNENELHGQGSEDAYNSQSQSSDLRMAHRSSLSSLSNQRCTT) the chain is Cytoplasmic. Residue S603 is modified to Phosphoserine.

Belongs to the major facilitator superfamily.

The protein localises to the membrane. The catalysed reaction is chloride(in) = chloride(out). In terms of biological role, outward-rectifying chloride channel involved in chloride homeostasis. The sequence is that of Major facilitator superfamily domain-containing protein YCR023C from Saccharomyces cerevisiae (strain ATCC 204508 / S288c) (Baker's yeast).